We begin with the raw amino-acid sequence, 421 residues long: UDP-N-acetylglucosamine 1-carboxyvinyltransferase (421 aa).

Position 22-23 (22-23 (KN)) interacts with phosphoenolpyruvate. Residue Arg-94 coordinates UDP-N-acetyl-alpha-D-glucosamine. The active-site Proton donor is the Cys-118. At Cys-118 the chain carries 2-(S-cysteinyl)pyruvic acid O-phosphothioketal. Residues 163-166 (KVSV), Asp-308, and Ile-330 contribute to the UDP-N-acetyl-alpha-D-glucosamine site.

This sequence belongs to the EPSP synthase family. MurA subfamily.

It is found in the cytoplasm. It catalyses the reaction phosphoenolpyruvate + UDP-N-acetyl-alpha-D-glucosamine = UDP-N-acetyl-3-O-(1-carboxyvinyl)-alpha-D-glucosamine + phosphate. It functions in the pathway cell wall biogenesis; peptidoglycan biosynthesis. Cell wall formation. Adds enolpyruvyl to UDP-N-acetylglucosamine. This is UDP-N-acetylglucosamine 1-carboxyvinyltransferase from Orientia tsutsugamushi (strain Ikeda) (Rickettsia tsutsugamushi).